A 354-amino-acid chain; its full sequence is Uroporphyrinogen decarboxylase (354 aa).

Substrate contacts are provided by residues 27 to 31 (RQAGR), Asp-77, Tyr-154, Ser-209, and His-327.

Belongs to the uroporphyrinogen decarboxylase family. As to quaternary structure, homodimer.

The protein localises to the cytoplasm. It carries out the reaction uroporphyrinogen III + 4 H(+) = coproporphyrinogen III + 4 CO2. It participates in porphyrin-containing compound metabolism; protoporphyrin-IX biosynthesis; coproporphyrinogen-III from 5-aminolevulinate: step 4/4. Functionally, catalyzes the decarboxylation of four acetate groups of uroporphyrinogen-III to yield coproporphyrinogen-III. The sequence is that of Uroporphyrinogen decarboxylase from Shewanella loihica (strain ATCC BAA-1088 / PV-4).